Here is a 662-residue protein sequence, read N- to C-terminus: Transketolase (662 aa).

A substrate-binding site is contributed by His28. Thiamine diphosphate-binding positions include His68 and 115–117 (GPL). Asp156 contacts Mg(2+). Residues Gly157 and Asn186 each coordinate thiamine diphosphate. Mg(2+) contacts are provided by Asn186 and Ile188. Substrate-binding residues include His261, Arg356, and Ser383. His261 serves as a coordination point for thiamine diphosphate. The active-site Proton donor is Glu410. Phe436 is a binding site for thiamine diphosphate. Residues His460, Asp468, and Arg519 each contribute to the substrate site.

It belongs to the transketolase family. As to quaternary structure, homodimer. The cofactor is Mg(2+). Ca(2+) is required as a cofactor. It depends on Mn(2+) as a cofactor. Co(2+) serves as cofactor. Requires thiamine diphosphate as cofactor.

It carries out the reaction D-sedoheptulose 7-phosphate + D-glyceraldehyde 3-phosphate = aldehydo-D-ribose 5-phosphate + D-xylulose 5-phosphate. It participates in carbohydrate biosynthesis; Calvin cycle. The protein operates within carbohydrate degradation; pentose phosphate pathway. Catalyzes the transfer of a two-carbon ketol group from a ketose donor to an aldose acceptor, via a covalent intermediate with the cofactor thiamine pyrophosphate. This is Transketolase (tkt) from Staphylococcus aureus (strain COL).